The primary structure comprises 178 residues: UPF0098 protein PYRAB11530 (178 aa).

Positions 1 to 22 are cleaved as a signal peptide; sequence MRYLVPLLVFMVLGMGCLGGGG.

It belongs to the UPF0098 family.

The protein is UPF0098 protein PYRAB11530 of Pyrococcus abyssi (strain GE5 / Orsay).